The chain runs to 516 residues: MALSQSVPFSATELLLASAIFCLVFWVLKGLRPRVPKGLKSPPEPWGWPLLGHVLTLGKNPHLALSRMSQRYGDVLQIRIGSTPVLVLSRLDTIRQALVRQGDDFKGRPDLYTSTLITDGQSLTFSTDSGPVWAARRRLAQNALNTFSIASDPASSSSCYLEEHVSKEAKALISRLQELMAGPGHFDPYNQVVVSVANVIGAMCFGQHFPESSDEMLSLVKNTHEFVETASSGNPLDFFPILRYLPNPALQRFKAFNQRFLWFLQKTVQEHYQDFDKNSVRDITGALFKHSKKGPRASGNLIPQEKIVNLVNDIFGAGFDTVTTAISWSLMYLVTKPEIQRKIQKELDTVIGRERRPRLSDRPQLPYLEAFILETFRHSSFLPFTIPHSTTRDTTLNGFYIPKKCCVFVNQWQVNHDPELWEDPSEFRPERFLTADGTAINKPLSEKMMLFGMGKRRCIGEVLAKWEIFLFLAILLQQLEFSVPPGVKVDLTPIYGLTMKHARCEHVQARLRFSIN.

An O-linked (GlcNAc) serine glycan is attached at Ser69. Phe226 contributes to the substrate binding site. Cys458 serves as a coordination point for heme.

It belongs to the cytochrome P450 family. In terms of assembly, interacts with PGRMC1; the interaction requires PGRMC1 homodimerization. Requires heme as cofactor. Liver.

Its subcellular location is the endoplasmic reticulum membrane. The protein localises to the microsome membrane. The enzyme catalyses an organic molecule + reduced [NADPH--hemoprotein reductase] + O2 = an alcohol + oxidized [NADPH--hemoprotein reductase] + H2O + H(+). It carries out the reaction 17beta-estradiol + reduced [NADPH--hemoprotein reductase] + O2 = 2-hydroxy-17beta-estradiol + oxidized [NADPH--hemoprotein reductase] + H2O + H(+). It catalyses the reaction 17beta-estradiol + reduced [NADPH--hemoprotein reductase] + O2 = 4-hydroxy-17beta-estradiol + oxidized [NADPH--hemoprotein reductase] + H2O + H(+). The catalysed reaction is estrone + reduced [NADPH--hemoprotein reductase] + O2 = 2-hydroxyestrone + oxidized [NADPH--hemoprotein reductase] + H2O + H(+). The enzyme catalyses estrone + reduced [NADPH--hemoprotein reductase] + O2 = 4-hydroxyestrone + oxidized [NADPH--hemoprotein reductase] + H2O + H(+). It carries out the reaction cholesterol + reduced [NADPH--hemoprotein reductase] + O2 = 25-hydroxycholesterol + oxidized [NADPH--hemoprotein reductase] + H2O + H(+). It catalyses the reaction all-trans-retinol + reduced [NADPH--hemoprotein reductase] + O2 = all-trans-retinal + oxidized [NADPH--hemoprotein reductase] + 2 H2O + H(+). The catalysed reaction is all-trans-retinal + reduced [NADPH--hemoprotein reductase] + O2 = all-trans-retinoate + oxidized [NADPH--hemoprotein reductase] + H2O + 2 H(+). The enzyme catalyses (5Z,8Z,11Z,14Z)-eicosatetraenoate + reduced [NADPH--hemoprotein reductase] + O2 = (14R,15S)-epoxy-(5Z,8Z,11Z)-eicosatrienoate + oxidized [NADPH--hemoprotein reductase] + H2O + H(+). It carries out the reaction (5Z,8Z,11Z,14Z)-eicosatetraenoate + reduced [NADPH--hemoprotein reductase] + O2 = (14S,15R)-epoxy-(5Z,8Z,11Z)-eicosatrienoate + oxidized [NADPH--hemoprotein reductase] + H2O + H(+). It catalyses the reaction (5Z,8Z,11Z,14Z,17Z)-eicosapentaenoate + reduced [NADPH--hemoprotein reductase] + O2 = (17R,18S)-epoxy-(5Z,8Z,11Z,14Z)-eicosatetraenoate + oxidized [NADPH--hemoprotein reductase] + H2O + H(+). The catalysed reaction is (4Z,7Z,10Z,13Z,16Z,19Z)-docosahexaenoate + reduced [NADPH--hemoprotein reductase] + O2 = (19R,20S)-epoxy-(4Z,7Z,10Z,13Z,16Z)-docosapentaenoate + oxidized [NADPH--hemoprotein reductase] + H2O + H(+). The enzyme catalyses (5S)-hydroperoxy-(6E,8Z,11Z,14Z)-eicosatetraenoate = 5-oxo-(6E,8Z,11Z,14Z)-eicosatetraenoate + H2O. It carries out the reaction (12S)-hydroperoxy-(5Z,8Z,10E,14Z)-eicosatetraenoate = 12-oxo-(5Z,8Z,10E,14Z)-eicosatetraenoate + H2O. It catalyses the reaction (15S)-hydroperoxy-(5Z,8Z,11Z,13E)-eicosatetraenoate = 15-oxo-(5Z,8Z,11Z,13E)-eicosatetraenoate + H2O. The catalysed reaction is (13S)-hydroperoxy-(9Z,11E)-octadecadienoate = 13-oxo-(9Z,11E)-octadecadienoate + H2O. The enzyme catalyses (5Z,8Z,11Z,14Z)-eicosatetraenoate + reduced [NADPH--hemoprotein reductase] + O2 = 13-hydroxy-(5Z,8Z,11Z,14Z)-eicosatetraenoate + oxidized [NADPH--hemoprotein reductase] + H2O + H(+). It carries out the reaction (5Z,8Z,11Z,14Z)-eicosatetraenoate + reduced [NADPH--hemoprotein reductase] + O2 = 19-hydroxy-(5Z,8Z,11Z,14Z)-eicosatetraenoate + oxidized [NADPH--hemoprotein reductase] + H2O + H(+). It catalyses the reaction (9Z,12Z)-octadecadienoate + reduced [NADPH--hemoprotein reductase] + O2 = 11-hydroxy-(9Z,12Z)-octadecadienoate + oxidized [NADPH--hemoprotein reductase] + H2O + H(+). It functions in the pathway cofactor metabolism; retinol metabolism. The protein operates within steroid metabolism; cholesterol metabolism. It participates in lipid metabolism; arachidonate metabolism. Its function is as follows. A cytochrome P450 monooxygenase involved in the metabolism of various endogenous substrates, including fatty acids, steroid hormones and vitamins. Mechanistically, uses molecular oxygen inserting one oxygen atom into a substrate, and reducing the second into a water molecule, with two electrons provided by NADPH via cytochrome P450 reductase (NADPH--hemoprotein reductase). Catalyzes the hydroxylation of carbon-hydrogen bonds. Exhibits high catalytic activity for the formation of hydroxyestrogens from estrone (E1) and 17beta-estradiol (E2), namely 2-hydroxy E1 and E2. Metabolizes cholesterol toward 25-hydroxycholesterol, a physiological regulator of cellular cholesterol homeostasis. May act as a major enzyme for all-trans retinoic acid biosynthesis in the liver. Catalyzes two successive oxidative transformation of all-trans retinol to all-trans retinal and then to the active form all-trans retinoic acid. Primarily catalyzes stereoselective epoxidation of the last double bond of polyunsaturated fatty acids (PUFA), displaying a strong preference for the (R,S) stereoisomer. Catalyzes bisallylic hydroxylation and omega-1 hydroxylation of PUFA. May also participate in eicosanoids metabolism by converting hydroperoxide species into oxo metabolites (lipoxygenase-like reaction, NADPH-independent). Plays a role in the oxidative metabolism of xenobiotics. Catalyzes the N-hydroxylation of heterocyclic amines and the O-deethylation of phenacetin. Metabolizes caffeine via N3-demethylation. This chain is Cytochrome P450 1A2, found in Homo sapiens (Human).